A 438-amino-acid polypeptide reads, in one-letter code: Beta-1,3-galactosyl-O-glycosyl-glycoprotein beta-1,6-N-acetylglucosaminyltransferase 3 (438 aa).

Residues 1 to 6 lie on the Cytoplasmic side of the membrane; that stretch reads MVQWKR. Residues 7 to 26 form a helical; Signal-anchor for type II membrane protein membrane-spanning segment; that stretch reads LCQLHYLWALGCYMLLATVA. At 27 to 438 the chain is on the lumenal side; it reads LKLSFRLKCD…RYKAIYGTEL (412 aa). Disulfide bonds link C70-C227, C161-C382, C182-C209, and C391-C423. N289 carries an N-linked (GlcNAc...) asparagine glycan.

It belongs to the glycosyltransferase 14 family. N-glycosylated. In terms of tissue distribution, primarily expressed in mucus-secreting tissues. Expressed in colon, kidney, small intestine, trachea, and stomach, where mucin is produced.

The protein localises to the golgi apparatus membrane. The enzyme catalyses a 3-O-[beta-D-galactosyl-(1-&gt;3)-N-acetyl-alpha-D-galactosaminyl]-L-seryl-[protein] + UDP-N-acetyl-alpha-D-glucosamine = 3-O-{beta-D-galactosyl-(1-&gt;3)-[N-acetyl-beta-D-glucosaminyl-(1-&gt;6)]-N-acetyl-alpha-D-galactosaminyl}-L-seryl-[protein] + UDP + H(+). It carries out the reaction a 3-O-[beta-D-galactosyl-(1-&gt;3)-N-acetyl-alpha-D-galactosaminyl]-L-threonyl-[protein] + UDP-N-acetyl-alpha-D-glucosamine = a 3-O-{beta-D-galactosyl-(1-&gt;3)-[N-acetyl-beta-D-glucosaminyl-(1-&gt;6)]-N-acetyl-alpha-D-galactosaminyl}-L-threonyl-[protein] + UDP + H(+). It catalyses the reaction a beta-D-Gal-(1-&gt;4)-beta-D-GlcNAc-(1-&gt;3)-beta-D-Gal-(1-&gt;4)-beta-D-GlcNAc derivative + UDP-N-acetyl-alpha-D-glucosamine = a beta-D-Gal-(1-&gt;4)-beta-D-GlcNAc-(1-&gt;3)-[beta-D-GlcNAc-(1-&gt;6)]-beta-D-Gal-(1-&gt;4)-N-acetyl-beta-D-glucosaminyl derivative + UDP + H(+). The catalysed reaction is 3-O-[N-acetyl-beta-D-glucosaminyl-(1-&gt;3)-N-acetyl-alpha-D-galactosaminyl]-L-seryl-[protein] + UDP-N-acetyl-alpha-D-glucosamine = 3-O-[N-acetyl-beta-D-glucosaminyl-(1-&gt;3)-[N-acetyl-beta-D-glucosaminyl-(1-&gt;6)]-N-acetyl-alpha-D-galactosaminyl]-L-seryl-[protein] + UDP + H(+). The enzyme catalyses a 3-O-[N-acetyl-beta-D-glucosaminyl-(1-&gt;3)-N-acetyl-alpha-D-galactosaminyl]-L-threonyl-[protein] + UDP-N-acetyl-alpha-D-glucosamine = 3-O-[N-acetyl-beta-D-glucosaminyl-(1-&gt;3)-[N-acetyl-beta-D-glucosaminyl-(1-&gt;6)]-N-acetyl-alpha-D-galactosaminyl]-L-threonyl-[protein] + UDP + H(+). Its pathway is protein modification; protein glycosylation. Its function is as follows. Glycosyltransferase that can synthesize all known mucin beta 6 N-acetylglucosaminides. Mediates core 2 and core 4 O-glycan branching, 2 important steps in mucin-type biosynthesis. Also has I-branching enzyme activity by converting linear into branched poly-N-acetyllactosaminoglycans, leading to introduce the blood group I antigen during embryonic development. The chain is Beta-1,3-galactosyl-O-glycosyl-glycoprotein beta-1,6-N-acetylglucosaminyltransferase 3 (GCNT3) from Homo sapiens (Human).